A 288-amino-acid polypeptide reads, in one-letter code: Pantothenate synthetase (288 aa).

31-38 is a binding site for ATP; it reads MGNLHRGH. Residue His-38 is the Proton donor of the active site. Gln-62 is a binding site for (R)-pantoate. A beta-alanine-binding site is contributed by Gln-62. Position 150-153 (150-153) interacts with ATP; the sequence is GQKD. Gln-156 lines the (R)-pantoate pocket. ATP contacts are provided by residues Ile-179 and 187–190; that span reads LSSR.

It belongs to the pantothenate synthetase family. As to quaternary structure, homodimer.

Its subcellular location is the cytoplasm. The enzyme catalyses (R)-pantoate + beta-alanine + ATP = (R)-pantothenate + AMP + diphosphate + H(+). It participates in cofactor biosynthesis; (R)-pantothenate biosynthesis; (R)-pantothenate from (R)-pantoate and beta-alanine: step 1/1. Functionally, catalyzes the condensation of pantoate with beta-alanine in an ATP-dependent reaction via a pantoyl-adenylate intermediate. The chain is Pantothenate synthetase from Wigglesworthia glossinidia brevipalpis.